Consider the following 247-residue polypeptide: 7-carboxy-7-deazaguanine synthase (247 aa).

Substrate is bound by residues 15–17 and arginine 30; that span reads IQG. In terms of domain architecture, Radical SAM core spans 21–247; the sequence is LVGRRQIFVR…PQMHRALGLR (227 aa). [4Fe-4S] cluster contacts are provided by cysteine 34, cysteine 38, and cysteine 41. Threonine 43 contacts Mg(2+). Threonine 78 provides a ligand contact to substrate. Glycine 80 contributes to the S-adenosyl-L-methionine binding site.

It belongs to the radical SAM superfamily. 7-carboxy-7-deazaguanine synthase family. Homodimer. [4Fe-4S] cluster serves as cofactor. S-adenosyl-L-methionine is required as a cofactor. It depends on Mg(2+) as a cofactor.

It catalyses the reaction 6-carboxy-5,6,7,8-tetrahydropterin + H(+) = 7-carboxy-7-deazaguanine + NH4(+). Its pathway is purine metabolism; 7-cyano-7-deazaguanine biosynthesis. Its function is as follows. Catalyzes the complex heterocyclic radical-mediated conversion of 6-carboxy-5,6,7,8-tetrahydropterin (CPH4) to 7-carboxy-7-deazaguanine (CDG), a step common to the biosynthetic pathways of all 7-deazapurine-containing compounds. This chain is 7-carboxy-7-deazaguanine synthase, found in Methanothermobacter thermautotrophicus (strain ATCC 29096 / DSM 1053 / JCM 10044 / NBRC 100330 / Delta H) (Methanobacterium thermoautotrophicum).